A 101-amino-acid chain; its full sequence is Large ribosomal subunit protein bL21 (101 aa).

It belongs to the bacterial ribosomal protein bL21 family. Part of the 50S ribosomal subunit. Contacts protein L20.

This protein binds to 23S rRNA in the presence of protein L20. The sequence is that of Large ribosomal subunit protein bL21 from Anaeromyxobacter dehalogenans (strain 2CP-1 / ATCC BAA-258).